A 344-amino-acid chain; its full sequence is Phenylalanine--tRNA ligase alpha subunit (344 aa).

Position 269 (E269) interacts with Mg(2+).

It belongs to the class-II aminoacyl-tRNA synthetase family. Phe-tRNA synthetase alpha subunit type 1 subfamily. As to quaternary structure, tetramer of two alpha and two beta subunits. Requires Mg(2+) as cofactor.

It localises to the cytoplasm. It catalyses the reaction tRNA(Phe) + L-phenylalanine + ATP = L-phenylalanyl-tRNA(Phe) + AMP + diphosphate + H(+). The polypeptide is Phenylalanine--tRNA ligase alpha subunit (Ralstonia pickettii (strain 12J)).